We begin with the raw amino-acid sequence, 256 residues long: Small ribosomal subunit protein eS1 (256 aa).

Alanine 2 bears the N-acetylalanine; partial mark.

This sequence belongs to the eukaryotic ribosomal protein eS1 family. As to quaternary structure, component of the small ribosomal subunit. Mature ribosomes consist of a small (40S) and a large (60S) subunit. The 40S subunit contains about 33 different proteins and 1 molecule of RNA (18S). The 60S subunit contains about 49 different proteins and 3 molecules of RNA (25S, 5.8S and 5S).

It localises to the cytoplasm. The chain is Small ribosomal subunit protein eS1 (rps1) from Sclerotinia sclerotiorum (strain ATCC 18683 / 1980 / Ss-1) (White mold).